The primary structure comprises 755 residues: Exocyst complex component 3 (755 aa).

Coiled coils occupy residues Asp34–Gln62 and Arg618–Phe649. An N6-acetyllysine modification is found at Lys38.

This sequence belongs to the SEC6 family. As to quaternary structure, the exocyst complex is composed of EXOC1, EXOC2, EXOC3, EXOC4, EXOC5, EXOC6, EXOC7 and EXOC8. Interacts with EXOC3L1. Interacts with BIRC6/bruce. Interacts with MYRIP. Interacts with SLC6A9. Widely expressed, with highest levels in kidney, followed by brain (at protein level).

Its subcellular location is the cytoplasm. It is found in the perinuclear region. The protein localises to the cell projection. The protein resides in the growth cone. It localises to the neuron projection. Its subcellular location is the midbody. It is found in the golgi apparatus. Functionally, component of the exocyst complex involved in the docking of exocytic vesicles with fusion sites on the plasma membrane. The protein is Exocyst complex component 3 (Exoc3) of Rattus norvegicus (Rat).